Reading from the N-terminus, the 70-residue chain is NADH dehydrogenase [ubiquinone] 1 alpha subcomplex subunit 1 (70 aa).

Residues 1–21 (MWFEILPGLAIMGVCLVIPGV) form a helical membrane-spanning segment.

Belongs to the complex I NDUFA1 subunit family. In terms of assembly, complex I is composed of 45 different subunits.

It is found in the mitochondrion inner membrane. Its function is as follows. Accessory subunit of the mitochondrial membrane respiratory chain NADH dehydrogenase (Complex I), that is believed not to be involved in catalysis. Complex I functions in the transfer of electrons from NADH to the respiratory chain. The immediate electron acceptor for the enzyme is believed to be ubiquinone. The polypeptide is NADH dehydrogenase [ubiquinone] 1 alpha subcomplex subunit 1 (Ndufa1) (Mus musculus (Mouse)).